A 538-amino-acid polypeptide reads, in one-letter code: Inositol-3-phosphate synthase (538 aa).

Gly-74, Gly-75, Asn-76, Asn-77, Asp-150, Ser-186, Val-187, Gln-197, Asp-198, Arg-200, Thr-247, Ala-248, Asn-249, Thr-250, Gly-298, Ser-299, Asp-323, Ser-326, Asn-357, Asn-358, Asp-359, Lys-372, Gly-412, Asp-413, Asp-441, and Ser-442 together coordinate NAD(+).

Belongs to the myo-inositol 1-phosphate synthase family. In terms of assembly, homotetramer. NAD(+) is required as a cofactor.

The protein localises to the cytoplasm. It carries out the reaction D-glucose 6-phosphate = 1D-myo-inositol 3-phosphate. It participates in polyol metabolism; myo-inositol biosynthesis; myo-inositol from D-glucose 6-phosphate: step 1/2. In terms of biological role, key enzyme in myo-inositol biosynthesis pathway that catalyzes the conversion of glucose 6-phosphate to 1-myo-inositol 1-phosphate in a NAD-dependent manner. Rate-limiting enzyme in the synthesis of all inositol-containing compounds. This Candida glabrata (strain ATCC 2001 / BCRC 20586 / JCM 3761 / NBRC 0622 / NRRL Y-65 / CBS 138) (Yeast) protein is Inositol-3-phosphate synthase (INO1).